Consider the following 857-residue polypeptide: Leucine--tRNA ligase (857 aa).

The short motif at 42–52 is the 'HIGH' region element; sequence PYPSGKLHMGH. A 'KMSKS' region motif is present at residues 620–624; the sequence is KMSKS. Lysine 623 is an ATP binding site.

It belongs to the class-I aminoacyl-tRNA synthetase family.

Its subcellular location is the cytoplasm. It catalyses the reaction tRNA(Leu) + L-leucine + ATP = L-leucyl-tRNA(Leu) + AMP + diphosphate. The sequence is that of Leucine--tRNA ligase from Thiobacillus denitrificans (strain ATCC 25259 / T1).